Consider the following 75-residue polypeptide: DNA-directed RNA polymerase subunit omega (75 aa).

It belongs to the RNA polymerase subunit omega family. In terms of assembly, in cyanobacteria the RNAP catalytic core is composed of 2 alpha, 1 beta, 1 beta', 1 gamma and 1 omega subunit. When a sigma factor is associated with the core the holoenzyme is formed, which can initiate transcription.

The enzyme catalyses RNA(n) + a ribonucleoside 5'-triphosphate = RNA(n+1) + diphosphate. In terms of biological role, promotes RNA polymerase assembly. Latches the N- and C-terminal regions of the beta' subunit thereby facilitating its interaction with the beta and alpha subunits. This chain is DNA-directed RNA polymerase subunit omega, found in Synechococcus sp. (strain WH7803).